The sequence spans 428 residues: 3-phosphoshikimate 1-carboxyvinyltransferase (428 aa).

Residues K19, S20, and R24 each contribute to the 3-phosphoshikimate site. Phosphoenolpyruvate is bound at residue K19. Phosphoenolpyruvate-binding residues include G91 and R119. 3-phosphoshikimate-binding residues include S164, Q166, D312, and K339. Q166 contacts phosphoenolpyruvate. D312 acts as the Proton acceptor in catalysis. Residues R343 and R386 each contribute to the phosphoenolpyruvate site.

Belongs to the EPSP synthase family. As to quaternary structure, monomer.

The protein resides in the cytoplasm. The catalysed reaction is 3-phosphoshikimate + phosphoenolpyruvate = 5-O-(1-carboxyvinyl)-3-phosphoshikimate + phosphate. It participates in metabolic intermediate biosynthesis; chorismate biosynthesis; chorismate from D-erythrose 4-phosphate and phosphoenolpyruvate: step 6/7. Functionally, catalyzes the transfer of the enolpyruvyl moiety of phosphoenolpyruvate (PEP) to the 5-hydroxyl of shikimate-3-phosphate (S3P) to produce enolpyruvyl shikimate-3-phosphate and inorganic phosphate. In Bacillus velezensis (strain DSM 23117 / BGSC 10A6 / LMG 26770 / FZB42) (Bacillus amyloliquefaciens subsp. plantarum), this protein is 3-phosphoshikimate 1-carboxyvinyltransferase.